The primary structure comprises 256 residues: Trypsin, alkaline B (256 aa).

A signal peptide spans 1-17; the sequence is MRLFLALLALGFAAVAA. Residues 18-24 constitute a propeptide, activation peptide; that stretch reads VPANPQR. The 232-residue stretch at 25-256 folds into the Peptidase S1 domain; that stretch reads IVGGSTTTIQ…RFANWIRNNS (232 aa). A disulfide bridge connects residues Cys-55 and Cys-71. Catalysis depends on charge relay system residues His-70 and Asp-115. 2 disulfide bridges follow: Cys-180/Cys-197 and Cys-209/Cys-233. The active-site Charge relay system is Ser-213.

This sequence belongs to the peptidase S1 family. As to expression, midgut.

The protein resides in the secreted. Its subcellular location is the extracellular space. The enzyme catalyses Preferential cleavage: Arg-|-Xaa, Lys-|-Xaa.. The chain is Trypsin, alkaline B from Manduca sexta (Tobacco hawkmoth).